Here is a 321-residue protein sequence, read N- to C-terminus: Lipoyl synthase (321 aa).

[4Fe-4S] cluster-binding residues include C68, C73, C79, C94, C98, C101, and S308. The 218-residue stretch at F80–T297 folds into the Radical SAM core domain.

The protein belongs to the radical SAM superfamily. Lipoyl synthase family. [4Fe-4S] cluster serves as cofactor.

The protein localises to the cytoplasm. The catalysed reaction is [[Fe-S] cluster scaffold protein carrying a second [4Fe-4S](2+) cluster] + N(6)-octanoyl-L-lysyl-[protein] + 2 oxidized [2Fe-2S]-[ferredoxin] + 2 S-adenosyl-L-methionine + 4 H(+) = [[Fe-S] cluster scaffold protein] + N(6)-[(R)-dihydrolipoyl]-L-lysyl-[protein] + 4 Fe(3+) + 2 hydrogen sulfide + 2 5'-deoxyadenosine + 2 L-methionine + 2 reduced [2Fe-2S]-[ferredoxin]. The protein operates within protein modification; protein lipoylation via endogenous pathway; protein N(6)-(lipoyl)lysine from octanoyl-[acyl-carrier-protein]: step 2/2. Its function is as follows. Catalyzes the radical-mediated insertion of two sulfur atoms into the C-6 and C-8 positions of the octanoyl moiety bound to the lipoyl domains of lipoate-dependent enzymes, thereby converting the octanoylated domains into lipoylated derivatives. In Salmonella arizonae (strain ATCC BAA-731 / CDC346-86 / RSK2980), this protein is Lipoyl synthase.